The sequence spans 204 residues: ATP-dependent Clp protease proteolytic subunit 1 (204 aa).

The active-site Nucleophile is Ser97. His122 is an active-site residue.

Belongs to the peptidase S14 family. In terms of assembly, fourteen ClpP subunits assemble into 2 heptameric rings which stack back to back to give a disk-like structure with a central cavity, resembling the structure of eukaryotic proteasomes.

The protein resides in the cytoplasm. It catalyses the reaction Hydrolysis of proteins to small peptides in the presence of ATP and magnesium. alpha-casein is the usual test substrate. In the absence of ATP, only oligopeptides shorter than five residues are hydrolyzed (such as succinyl-Leu-Tyr-|-NHMec, and Leu-Tyr-Leu-|-Tyr-Trp, in which cleavage of the -Tyr-|-Leu- and -Tyr-|-Trp bonds also occurs).. Cleaves peptides in various proteins in a process that requires ATP hydrolysis. Has a chymotrypsin-like activity. Plays a major role in the degradation of misfolded proteins. This is ATP-dependent Clp protease proteolytic subunit 1 from Trichormus variabilis (strain ATCC 29413 / PCC 7937) (Anabaena variabilis).